The primary structure comprises 120 residues: Methylglyoxal synthase (120 aa).

Residues M1–L120 form the MGS-like domain. Residues H8, K12, and S54–G55 contribute to the substrate site. The Proton donor/acceptor role is filled by D60. H87 provides a ligand contact to substrate.

It belongs to the methylglyoxal synthase family.

It carries out the reaction dihydroxyacetone phosphate = methylglyoxal + phosphate. Catalyzes the formation of methylglyoxal from dihydroxyacetone phosphate. In Natranaerobius thermophilus (strain ATCC BAA-1301 / DSM 18059 / JW/NM-WN-LF), this protein is Methylglyoxal synthase.